The following is a 1698-amino-acid chain: Cullin-7 (1698 aa).

The disordered stretch occupies residues 315–357 (QASDRPRSSARSPGSIFQPQLADVSPGLPAAQAQPSFRRSRRF). Serine 339 carries the post-translational modification Phosphoserine. In terms of domain architecture, CPH spans 360–433 (RSEFASGNTY…HWHMLEILGF (74 aa)). Positions 601–611 (SEDAAKVEAKE) are enriched in basic and acidic residues. The disordered stretch occupies residues 601–623 (SEDAAKVEAKEPPSQSPNTPLQR). A DOC domain is found at 814–993 (PINIPFFDVF…HTRLFYMVRA (180 aa)). The interval 1345 to 1370 (GASGKEHKSEKEEEAGAAAVVDVAEG) is disordered. Lysine 1576 is covalently cross-linked (Glycyl lysine isopeptide (Lys-Gly) (interchain with G-Cter in NEDD8)).

This sequence belongs to the cullin family. Component of the 3M complex, composed of core components CUL7, CCDC8 and OBSL1. Component of the Cul7-RING(FBXW8) complex consisting of CUL7, RBX1, SKP1 and FBXW8. Within the Cul7-RING(FBXW8) complex interacts with FBXW8 and RBX1, but not with SKP1. Interacts with CUL1 (via the C-terminal domain); the interaction seems to be mediated by FBXW8; it is likely specific to FBXW8, but not other F-box proteins. Interacts (via the CPH domain) with p53/TP53; the interaction preferentially involves tetrameric and dimeric p53/TP53; this interaction recruits p53/TP53 for ubiquitination by neddylated CUL1-RBX1. The CUL7-CUL9 heterodimer seems to interact specifically with p53/TP53. Interacts with FBXW8; interaction is mutually exclusive of binding to CUL9 or p53/TP53. Interacts with CUL9; leading to inhibited CUL9 activity. Interacts with OBSL1. Interacts (as part of the 3M complex) with HDAC4 and HDAC5; it is negatively regulated by ANKRA2. In terms of assembly, (Microbial infection) Interacts with SV40 Large T antigen; this interaction seems to inhibit CUL7. Post-translationally, according to a report, may not be neddylated despite the conserved consensus site for neddylation at Lys-1576. Structural study of the Cul7-RING(FBXW8) reveals that both CUL7 and RBX1 are in orientations that are incompatible with neddylation. In terms of tissue distribution, highly expressed in fetal kidney and adult skeletal muscle. Also abundant in fetal brain, as well as in adult pancreas, kidney, placenta and heart. Detected in trophoblasts, lymphoblasts, osteoblasts, chondrocytes and skin fibroblasts.

The protein resides in the cytoplasm. The protein localises to the cytoskeleton. It localises to the microtubule organizing center. Its subcellular location is the centrosome. It is found in the perinuclear region. The protein resides in the golgi apparatus. The protein operates within protein modification; protein ubiquitination. In terms of biological role, core component of the 3M and Cul7-RING(FBXW8) complexes, which mediate the ubiquitination and subsequent proteasomal degradation of target proteins. Core component of the 3M complex, a complex required to regulate microtubule dynamics and genome integrity. It is unclear how the 3M complex regulates microtubules, it could act by controlling the level of a microtubule stabilizer. The Cul7-RING(FBXW8) complex alone lacks ubiquitination activity and does not promote polyubiquitination and proteasomal degradation of p53/TP53. However it mediates recruitment of p53/TP53 for ubiquitination by neddylated CUL1-RBX1. Interaction with CUL9 is required to inhibit CUL9 activity and ubiquitination of BIRC5. The Cul7-RING(FBXW8) complex also mediates ubiquitination and consequent degradation of target proteins such as GORASP1, IRS1 and MAP4K1/HPK1. Ubiquitination of GORASP1 regulates Golgi morphogenesis and dendrite patterning in brain. Mediates ubiquitination and degradation of IRS1 in a mTOR-dependent manner: the Cul7-RING(FBXW8) complex recognizes and binds IRS1 previously phosphorylated by S6 kinase (RPS6KB1 or RPS6KB2). The Cul7-RING(FBXW8) complex also mediates ubiquitination of MAP4K1/HPK1: recognizes and binds autophosphorylated MAP4K1/HPK1, leading to its degradation, thereby affecting cell proliferation and differentiation. Acts as a regulator in trophoblast cell epithelial-mesenchymal transition and placental development. While the Cul7-RING(FBXW8) and the 3M complexes are associated and involved in common processes, CUL7 and the Cul7-RING(FBXW8) complex may have additional functions. Probably plays a role in the degradation of proteins involved in endothelial proliferation and/or differentiation. This is Cullin-7 (CUL7) from Homo sapiens (Human).